The primary structure comprises 160 residues: Phosphopantetheine adenylyltransferase (160 aa).

Ser-8 provides a ligand contact to substrate. ATP-binding positions include 8–9 (SF) and His-16. The substrate site is built by Lys-40, Leu-73, and Lys-87. Residues 88-90 (GLR), Glu-98, and 122-128 (YGYVSST) each bind ATP.

Belongs to the bacterial CoaD family. As to quaternary structure, homohexamer. It depends on Mg(2+) as a cofactor.

It is found in the cytoplasm. The catalysed reaction is (R)-4'-phosphopantetheine + ATP + H(+) = 3'-dephospho-CoA + diphosphate. Its pathway is cofactor biosynthesis; coenzyme A biosynthesis; CoA from (R)-pantothenate: step 4/5. In terms of biological role, reversibly transfers an adenylyl group from ATP to 4'-phosphopantetheine, yielding dephospho-CoA (dPCoA) and pyrophosphate. In Corynebacterium glutamicum (strain R), this protein is Phosphopantetheine adenylyltransferase.